The sequence spans 638 residues: Nitrous-oxide reductase (638 aa).

The tat-type signal signal peptide spans Met-1–Ala-52. The Cu cation site is built by His-129, His-130, and His-178. 5 residues coordinate Ca(2+): Tyr-256, Glu-259, Met-267, Asp-273, and Asn-324. His-326, His-382, and His-433 together coordinate Cu cation. 2 residues coordinate Ca(2+): Lys-454 and Glu-469. Positions 494, 583, 618, 620, 622, 626, and 629 each coordinate Cu cation. The COX2-like stretch occupies residues Asn-542–Ala-638.

Belongs to the NosZ family. It in the C-terminal section; belongs to the cytochrome c oxidase subunit 2 family. Homodimer. It depends on Ca(2+) as a cofactor. The cofactor is Cu cation. Post-translationally, predicted to be exported by the Tat system. The position of the signal peptide cleavage has not been experimentally proven. The N-terminus is blocked.

Its subcellular location is the periplasm. The catalysed reaction is N2 + 2 Fe(III)-[cytochrome c] + H2O = nitrous oxide + 2 Fe(II)-[cytochrome c] + 2 H(+). It functions in the pathway nitrogen metabolism; nitrate reduction (denitrification); dinitrogen from nitrate: step 4/4. In terms of biological role, nitrous-oxide reductase is part of a bacterial respiratory system which is activated under anaerobic conditions in the presence of nitrate or nitrous oxide. This chain is Nitrous-oxide reductase (nosZ), found in Stutzerimonas stutzeri (Pseudomonas stutzeri).